Consider the following 373-residue polypeptide: Probable peptidoglycan glycosyltransferase FtsW (373 aa).

The next 9 helical transmembrane spans lie at 15–35 (LVILLMAVALTCFGVVMVYSA), 48–68 (FYFLKRQGVYALLGFGVMAVA), 80–100 (AVPILLGCLFLLFLVFIPGIG), 144–164 (FFSTGFLPYMVLLSVVLLILL), 168–188 (DLGAALTMGLVAIIMLFAAGT), 192–212 (YIIAMGMMALPILYFLVMNVD), 278–298 (LGLIGVTVIAAMFLMLVLRGV), 311–331 (FLAFGIATLLGIQSFVNMAVV), and 342–362 (LPFISYGGSSLIVTLFAVGIL).

It belongs to the SEDS family. FtsW subfamily.

The protein resides in the cell inner membrane. It carries out the reaction [GlcNAc-(1-&gt;4)-Mur2Ac(oyl-L-Ala-gamma-D-Glu-L-Lys-D-Ala-D-Ala)](n)-di-trans,octa-cis-undecaprenyl diphosphate + beta-D-GlcNAc-(1-&gt;4)-Mur2Ac(oyl-L-Ala-gamma-D-Glu-L-Lys-D-Ala-D-Ala)-di-trans,octa-cis-undecaprenyl diphosphate = [GlcNAc-(1-&gt;4)-Mur2Ac(oyl-L-Ala-gamma-D-Glu-L-Lys-D-Ala-D-Ala)](n+1)-di-trans,octa-cis-undecaprenyl diphosphate + di-trans,octa-cis-undecaprenyl diphosphate + H(+). It functions in the pathway cell wall biogenesis; peptidoglycan biosynthesis. Functionally, peptidoglycan polymerase that is essential for cell division. This is Probable peptidoglycan glycosyltransferase FtsW from Geobacter sulfurreducens (strain DL-1 / KN400).